A 530-amino-acid chain; its full sequence is FSD1-like protein (530 aa).

Met1 is modified (N-acetylmethionine). Positions 102–141 (KQEQARKSQELQSQISQCNNALENSEELLEFATRSLDIKE) form a coiled coil. A COS domain is found at 137–194 (LDIKEPEEFSKAARQIKDRVTMASAFRLSLKPKVSDNMTHLMVDFSQERQMLQTLKFL). Residues 196-300 (VPKAPEIDPV…DPVTLETKAL (105 aa)) enclose the Fibronectin type-III domain. Positions 300–506 (LNFNLDNSSS…LSTGMQVPSA (207 aa)) constitute a B30.2/SPRY domain. Residues 322–366 (WDPTGGKGQESKIKGKENKGRSGTPSPKRTSVGSRPPAVRGSRDR) form a disordered region. Positions 330 to 341 (QESKIKGKENKG) are enriched in basic and acidic residues. Residues 342 to 354 (RSGTPSPKRTSVG) are compositionally biased toward polar residues. Phosphoserine is present on residues Ser520 and Ser523.

The sequence is that of FSD1-like protein (FSD1L) from Homo sapiens (Human).